The sequence spans 218 residues: Large ribosomal subunit protein uL4 (218 aa).

The segment at 46–102 (ARQGTHSTKTRGEVRGGGRKPFRQKGTGRARQGSIRAPHFTGGGISHGPKPRDYSQR) is disordered. Basic residues predominate over residues 62 to 73 (GGRKPFRQKGTG).

Belongs to the universal ribosomal protein uL4 family. As to quaternary structure, part of the 50S ribosomal subunit.

Functionally, one of the primary rRNA binding proteins, this protein initially binds near the 5'-end of the 23S rRNA. It is important during the early stages of 50S assembly. It makes multiple contacts with different domains of the 23S rRNA in the assembled 50S subunit and ribosome. Its function is as follows. Forms part of the polypeptide exit tunnel. The polypeptide is Large ribosomal subunit protein uL4 (Corynebacterium glutamicum (strain R)).